The sequence spans 135 residues: Ribosome-binding factor A (135 aa).

Belongs to the RbfA family. Monomer. Binds 30S ribosomal subunits, but not 50S ribosomal subunits or 70S ribosomes.

The protein resides in the cytoplasm. Its function is as follows. One of several proteins that assist in the late maturation steps of the functional core of the 30S ribosomal subunit. Associates with free 30S ribosomal subunits (but not with 30S subunits that are part of 70S ribosomes or polysomes). Required for efficient processing of 16S rRNA. May interact with the 5'-terminal helix region of 16S rRNA. The polypeptide is Ribosome-binding factor A (Novosphingobium aromaticivorans (strain ATCC 700278 / DSM 12444 / CCUG 56034 / CIP 105152 / NBRC 16084 / F199)).